The following is a 1757-amino-acid chain: 1-phosphatidylinositol-3-phosphate 5-kinase FAB1A (1757 aa).

An FYVE-type zinc finger spans residues 36-102; the sequence is DQSCPVCYEC…VCNYCYKQWE (67 aa). Zn(2+)-binding residues include C42, C45, C58, C61, C66, C69, C94, and C97. Disordered regions lie at residues 125–193, 276–297, 313–346, and 684–709; these read ARSV…SDNQ, KTRQ…CEES, LPPE…YLRP, and AEKS…NFTS. Residues 134–145 show a composition bias toward polar residues; the sequence is NSSNCTIDSTAG. Acidic residues predominate over residues 317–337; that stretch reads PENEEDEREAVLSDDDGDEGD. Positions 1014–1087 form a coiled coil; it reads LQKESKEVIK…LQQMLNVVKD (74 aa). A PIPK domain is found at 1395 to 1719; sequence SFSLFDSVNL…RFRKAMTAYF (325 aa). Residues 1729 to 1739 show a composition bias toward low complexity; sequence AAVVPSNSSSA. The tract at residues 1729-1757 is disordered; sequence AAVVPSNSSSAEVKEEEEKDNPQAVGNKS.

As to quaternary structure, component of the PI(3,5)P2 regulatory complex at least composed of ATG18, SAC/FIG4, FAB1 and VAC14. Mg(2+) is required as a cofactor. It depends on Mn(2+) as a cofactor. Ubiquitous with highest expression levels in pollen, seed, and senescent leaves.

The protein resides in the endosome membrane. It carries out the reaction a 1,2-diacyl-sn-glycero-3-phospho-(1D-myo-inositol-3-phosphate) + ATP = a 1,2-diacyl-sn-glycero-3-phospho-(1D-myo-inositol-3,5-bisphosphate) + ADP + H(+). Functionally, the PI(3,5)P2 regulatory complex regulates both the synthesis and turnover of phosphatidylinositol 3,5-bisphosphate (PtdIns(3,5)P2). Catalyzes the phosphorylation of phosphatidylinositol 3-phosphate on the fifth hydroxyl of the myo-inositol ring, to form phosphatidylinositol 3,5-bisphosphate. Plays an important role in maintenance of endomembrane homeostasis including endocytosis, vacuole formation, and vacuolar acidification processes. Required for development of viable pollen. Might mediate recycling of auxin transporters. In Arabidopsis thaliana (Mouse-ear cress), this protein is 1-phosphatidylinositol-3-phosphate 5-kinase FAB1A (FAB1A).